A 524-amino-acid chain; its full sequence is Cytochrome P450 4F1 (524 aa).

The chain crosses the membrane as a helical span at residues 15-35 (VAFPWQTLLLFGASWILAQIL). The heme site is built by Glu-328 and Cys-468.

The protein belongs to the cytochrome P450 family. It depends on heme as a cofactor. As to expression, expressed in liver.

It localises to the endoplasmic reticulum membrane. The protein resides in the microsome membrane. It carries out the reaction (5Z,8Z,11Z,14Z)-eicosatetraenoate + reduced [NADPH--hemoprotein reductase] + O2 = 20-hydroxy-(5Z,8Z,11Z,14Z)-eicosatetraenoate + oxidized [NADPH--hemoprotein reductase] + H2O + H(+). The enzyme catalyses 5-hydroxy-(6E,8Z,11Z,14Z)-eicosatetraenoate + reduced [NADPH--hemoprotein reductase] + O2 = 5,20-dihydroxy-(6E,8Z,11Z,14Z)-eicosatetraenoate + oxidized [NADPH--hemoprotein reductase] + H2O + H(+). It catalyses the reaction 8-hydroxy-(5Z,9E,11Z,14Z)-eicosatetraenoate + reduced [NADPH--hemoprotein reductase] + O2 = 8,20-dihydroxy-(5Z,9E,11Z,14Z)-eicosatetraenoate + oxidized [NADPH--hemoprotein reductase] + H2O + H(+). The catalysed reaction is leukotriene B4 + reduced [NADPH--hemoprotein reductase] + O2 = 20-hydroxy-leukotriene B4 + oxidized [NADPH--hemoprotein reductase] + H2O + H(+). It carries out the reaction 6-trans-leukotriene B4 + reduced [NADPH--hemoprotein reductase] + O2 = 20-hydroxy-6-trans-leukotriene B4 + oxidized [NADPH--hemoprotein reductase] + H2O + H(+). The enzyme catalyses lipoxin A4 + reduced [NADPH--hemoprotein reductase] + O2 = 20-hydroxy-lipoxin A4 + oxidized [NADPH--hemoprotein reductase] + H2O + H(+). In terms of biological role, a cytochrome P450 monooxygenase involved in the metabolism of arachidonic acid and its oxygenated derivatives. Mechanistically, uses molecular oxygen inserting one oxygen atom into a substrate, and reducing the second into a water molecule, with two electrons provided by NADPH via cytochrome P450 reductase (CPR; NADPH-ferrihemoprotein reductase). Participates in the conversion of arachidonic acid to omega-hydroxyeicosatetraenoic acid (20-HETE), a signaling molecule acting both as vasoconstrictive and natriuretic with overall effect on arterial blood pressure. May play a role in the oxidative inactivation of eicosanoids, including both pro-inflammatory and anti-inflammatory mediators such as leukotriene B4 (LTB4), lipoxin A4 (LXA4), and several HETEs. The chain is Cytochrome P450 4F1 from Rattus norvegicus (Rat).